The chain runs to 1047 residues: Rab11 family-interacting protein 3 (1047 aa).

Disordered stretches follow at residues 1-107 (MELC…WPQE), 311-335 (SHSCPQEADTGCLSAKEPEEPDVSH), and 475-496 (PGPPSDPGPALSLPSEPGTAQE). A compositionally biased stretch (basic and acidic residues) spans 64-73 (EPHAPSRWAK). 2 consecutive EF-hand domains span residues 496–531 (EEGARLRAVFDALDRDGDGFVRIEDFIQFATVYGAE) and 528–563 (YGAEQVKDLTQYLDPSGLGVISFEDFYQGIVAIRNG). Positions 509, 511, 513, 520, 541, 543, and 552 each coordinate Ca(2+). Residues Ser641, Ser765, and Ser829 each carry the phosphoserine modification. The stretch at 750–985 (EEDIADKVIF…NGQIITLSIQ (236 aa)) forms a coiled coil. The tract at residues 775 to 879 (GEQHGRLRQE…MLDEIEELTQ (105 aa)) is ARF-binding domain (ABD). A disordered region spans residues 882–906 (SEEQENKRKMGDRLSHERHQFQRDK). 2 positions are modified to phosphoserine: Ser938 and Ser939. One can recognise an FIP-RBD domain in the interval 985–1047 (QGAKSLFSTS…ETNPSILEVK (63 aa)).

In terms of assembly, homodimer. Interacts with RAB11A; the interaction is direct and is required for the recruitment to endosomes. Interacts with RAB11B. Forms a ternary complex with RAB11A and dynein intermediate chain DYNC1LI1; RAB11FIP3 links RAB11A to dynein and the interaction regulates endocytic trafficking. Interacts with dynein intermediate chain and dynactin (DCTN1); the interaction activates dynein processivity. Interacts with ARF6 and EXOC7; the interaction serves for recruitment and tethering of recycling endosomes-derived vesicles to the cleavage furrow/midbody. Interacts with RACGAP1/MgcRacGAP; the interaction occurs at late telophase and is required for recruitment and tethering of recycling endosomes-derived vesicles to the cleavage furrow/midbody. Forms a complex with RAB11A and Rabin8/RAB3IP, probably a heterohexamer with two of each protein subunit, where RAB3IP and RAB11FIP3 simultaneously bind to RAB11A; the complex promotes preciliary trafficking. Forms a complex containing RAB11A, ASAP1, RAB3IP, RAP11FIP3 and ARF4; the complex promotes preciliary trafficking; the complex binds to RHO in photoreceptor cells and promotes RHO ciliary transport. Interacts with RAB11FIP4. Interacts with RAB25.

It localises to the recycling endosome membrane. The protein localises to the cytoplasm. Its subcellular location is the cytoskeleton. It is found in the microtubule organizing center. The protein resides in the centrosome. It localises to the cleavage furrow. The protein localises to the midbody. Its subcellular location is the golgi apparatus membrane. It is found in the golgi apparatus. The protein resides in the trans-Golgi network membrane. Functionally, downstream effector molecule for Rab11 GTPase which is involved in endocytic trafficking, cytokinesis and intracellular ciliogenesis by participating in membrane delivery. Recruited by Rab11 to endosomes where it links Rab11 to dynein motor complex. The functional Rab11-RAB11FIP3-dynein complex regulates the movement of peripheral sorting endosomes (SE) along microtubule tracks toward the microtubule organizing center/centrosome, generating the endocytic recycling compartment (ERC) during interphase of cell cycle. Facilitates the interaction between dynein and dynactin and activates dynein processivity. Binding with ASAP1 is needed to regulate the pericentrosomal localization of recycling endosomes. The Rab11-RAB11FIP3 complex is also implicated in the transport during telophase of vesicles derived from recycling endosomes to the cleavage furrow via centrosome-anchored microtubules, where the vesicles function to deliver membrane during late cytokinesis and abscission. The recruitment of Rab11-RAB11FIP3-containing endosomes to the cleavage furrow and tethering to the midbody is co-mediated by RAB11FIP3 interaction with ARF6-exocyst and RACGAP1-MKLP1 tethering complexes. Also involved in the Rab11-Rabin8-Rab8 ciliogenesis cascade by facilitating the orderly assembly of a ciliary targeting complex containing Rab11, ASAP1, Rabin8/RAB3IP, RAB11FIP3 and ARF4, which directs preciliary vesicle trafficking to mother centriole and ciliogenesis initiation. Also promotes the activity of Rab11 and ASAP1 in the ARF4-dependent Golgi-to-cilia transport of the sensory receptor rhodopsin. Competes with WDR44 for binding to Rab11, which controls intracellular ciliogenesis pathway. May play a role in breast cancer cell motility by regulating actin cytoskeleton. This is Rab11 family-interacting protein 3 from Mus musculus (Mouse).